We begin with the raw amino-acid sequence, 203 residues long: Peptidyl-tRNA hydrolase (203 aa).

Residue Tyr-18 coordinates tRNA. The Proton acceptor role is filled by His-23. Phe-69, Asn-71, and Asn-117 together coordinate tRNA.

This sequence belongs to the PTH family. As to quaternary structure, monomer.

The protein resides in the cytoplasm. The catalysed reaction is an N-acyl-L-alpha-aminoacyl-tRNA + H2O = an N-acyl-L-amino acid + a tRNA + H(+). Hydrolyzes ribosome-free peptidyl-tRNAs (with 1 or more amino acids incorporated), which drop off the ribosome during protein synthesis, or as a result of ribosome stalling. In terms of biological role, catalyzes the release of premature peptidyl moieties from peptidyl-tRNA molecules trapped in stalled 50S ribosomal subunits, and thus maintains levels of free tRNAs and 50S ribosomes. This is Peptidyl-tRNA hydrolase from Prochlorococcus marinus subsp. pastoris (strain CCMP1986 / NIES-2087 / MED4).